We begin with the raw amino-acid sequence, 1366 residues long: Serine/threonine-protein kinase RUNKEL (1366 aa).

ATP contacts are provided by residues 10-18 (IGHGKCSTV) and Lys33. Asp121 (proton acceptor) is an active-site residue. Disordered regions lie at residues 276–356 (TKPC…VNIL), 367–386 (QKEN…NENC), 398–502 (LDFD…DSSK), and 524–549 (PSRK…FSKK). A compositionally biased stretch (basic and acidic residues) spans 283–302 (RNGDRPNKTPPKYREKDRKG). Polar residues predominate over residues 304-313 (SKQNENSIQG). The span at 367 to 376 (QKENEKENYR) shows a compositional bias: basic and acidic residues. Acidic residues predominate over residues 398-414 (LDFDENNDDEGPDESEG). The span at 422-433 (QEERVMSHNENH) shows a compositional bias: basic and acidic residues. The segment covering 438 to 454 (VVSSNVPDENSSANETP) has biased composition (polar residues). 12 HEAT repeats span residues 595-633 (LTNG…HSTS), 638-675 (LANS…YIST), 699-737 (QVSN…QGAY), 835-872 (TEEK…NSRR), 878-907 (FCNA…AFVN), 908-945 (VIAS…RAPV), 946-986 (KTNA…LVEA), 992-1018 (DDFR…NGEI), 1019-1057 (IIRE…LLTE), 1072-1111 (ISNS…IKIS), 1279-1316 (TNLP…YACK), and 1329-1366 (GHDV…RLPR).

It belongs to the protein kinase superfamily. Ser/Thr protein kinase family. Binds to microtubules (MT). Expressed in proliferating tissues of seedlings, lateral roots, young rosette leaves, siliques, flowers, embryos and stems (including apical meristem).

The protein resides in the cytoplasm. It is found in the cytoskeleton. Its subcellular location is the phragmoplast. It localises to the spindle. It carries out the reaction L-seryl-[protein] + ATP = O-phospho-L-seryl-[protein] + ADP + H(+). The catalysed reaction is L-threonyl-[protein] + ATP = O-phospho-L-threonyl-[protein] + ADP + H(+). Functionally, essential protein that regulates phragmoplast microtubule organization during cell plate expansion in cytokinesis during cell division, both somatic and syncytial. Required for endosperm cellularisation. In pollen development, involved in cellularisation during microsporogenesis by regulating radial microtubules (MT) organization in microspore mother cells. Seems to not have kinase activity. The protein is Serine/threonine-protein kinase RUNKEL of Arabidopsis thaliana (Mouse-ear cress).